The sequence spans 71 residues: Non-structural protein 3x (71 aa).

The protein is Non-structural protein 3x of Feline coronavirus (strain FIPV WSU-79/1146) (FCoV).